Consider the following 715-residue polypeptide: Fatty acid oxidation complex subunit alpha (715 aa).

The enoyl-CoA hydratase/isomerase stretch occupies residues 1 to 190 (MIYEGKAITV…KVGAVDAVVA (190 aa)). Asp-297 contacts substrate. Residues 312 to 715 (HDVKQAAVLG…MAKNGQRFFN (404 aa)) form a 3-hydroxyacyl-CoA dehydrogenase region. NAD(+) contacts are provided by residues Met-325, Asp-344, 401–403 (VVE), Lys-408, and Ser-430. Catalysis depends on His-451, which acts as the For 3-hydroxyacyl-CoA dehydrogenase activity. Position 454 (Asn-454) interacts with NAD(+). Substrate contacts are provided by Asn-501 and Tyr-660.

In the N-terminal section; belongs to the enoyl-CoA hydratase/isomerase family. This sequence in the C-terminal section; belongs to the 3-hydroxyacyl-CoA dehydrogenase family. Heterotetramer of two alpha chains (FadB) and two beta chains (FadA).

It carries out the reaction a (3S)-3-hydroxyacyl-CoA + NAD(+) = a 3-oxoacyl-CoA + NADH + H(+). The catalysed reaction is a (3S)-3-hydroxyacyl-CoA = a (2E)-enoyl-CoA + H2O. It catalyses the reaction a 4-saturated-(3S)-3-hydroxyacyl-CoA = a (3E)-enoyl-CoA + H2O. The enzyme catalyses (3S)-3-hydroxybutanoyl-CoA = (3R)-3-hydroxybutanoyl-CoA. It carries out the reaction a (3Z)-enoyl-CoA = a 4-saturated (2E)-enoyl-CoA. The catalysed reaction is a (3E)-enoyl-CoA = a 4-saturated (2E)-enoyl-CoA. It functions in the pathway lipid metabolism; fatty acid beta-oxidation. Involved in the aerobic and anaerobic degradation of long-chain fatty acids via beta-oxidation cycle. Catalyzes the formation of 3-oxoacyl-CoA from enoyl-CoA via L-3-hydroxyacyl-CoA. It can also use D-3-hydroxyacyl-CoA and cis-3-enoyl-CoA as substrate. This Pseudomonas putida (strain GB-1) protein is Fatty acid oxidation complex subunit alpha.